Reading from the N-terminus, the 210-residue chain is dITP/XTP pyrophosphatase (210 aa).

Position 16-21 (16-21) interacts with substrate; sequence SNNKGK. Aspartate 79 serves as the catalytic Proton acceptor. Aspartate 79 contributes to the Mg(2+) binding site. Substrate is bound by residues serine 80, 166 to 169, lysine 189, and 194 to 195; these read FGYD and HR.

The protein belongs to the HAM1 NTPase family. As to quaternary structure, homodimer. Requires Mg(2+) as cofactor.

The catalysed reaction is XTP + H2O = XMP + diphosphate + H(+). It catalyses the reaction dITP + H2O = dIMP + diphosphate + H(+). It carries out the reaction ITP + H2O = IMP + diphosphate + H(+). Its function is as follows. Pyrophosphatase that catalyzes the hydrolysis of nucleoside triphosphates to their monophosphate derivatives, with a high preference for the non-canonical purine nucleotides XTP (xanthosine triphosphate), dITP (deoxyinosine triphosphate) and ITP. Seems to function as a house-cleaning enzyme that removes non-canonical purine nucleotides from the nucleotide pool, thus preventing their incorporation into DNA/RNA and avoiding chromosomal lesions. The protein is dITP/XTP pyrophosphatase of Acinetobacter baylyi (strain ATCC 33305 / BD413 / ADP1).